Consider the following 346-residue polypeptide: Queuosine 5'-phosphate N-glycosylase/hydrolase (346 aa).

Queuine-binding residues include His-49, Phe-243, Asp-245, Asp-310, and Asp-315. The Nucleophile or transition state stabilizer role is filled by Asp-245.

Belongs to the QNG1 protein family.

It catalyses the reaction queuosine 5'-phosphate + H2O = queuine + D-ribose 5-phosphate. In terms of biological role, catalyzes the hydrolysis of queuosine 5'-phosphate, releasing the nucleobase queuine (q). Is required for salvage of queuine from exogenous queuosine (Q) that is imported and then converted to queuosine 5'-phosphate intracellularly. This Schizosaccharomyces pombe (strain 972 / ATCC 24843) (Fission yeast) protein is Queuosine 5'-phosphate N-glycosylase/hydrolase.